We begin with the raw amino-acid sequence, 264 residues long: MAPASRLLALWALAAVALPGSGAEGDGGWRPGGPGAVAEEERCTVERRADLTYAEFVQQYAFVRPVILQGLTDNSRFRALCSRDRLLASFGDRVVRLSTANTYSYHKVDLPFQEYVEQLLHPQDPTSLGNDTLYFFGDNNFTEWASLFRHYSPPPFGLLGTAPAYSFGIAGAGSGVPFHWHGPGYSEVIYGRKRWFLYPPEKTPEFHPNKTTLAWLRDTYPALPPSARPLECTIRAGEVLYFPDRWWHATLNLDTSVFISTFLG.

An N-terminal signal peptide occupies residues 1 to 23 (MAPASRLLALWALAAVALPGSGA). Residues Asn-130, Asn-140, and Asn-209 are each glycosylated (N-linked (GlcNAc...) asparagine). The 134-residue stretch at 131-264 (DTLYFFGDNN…TSVFISTFLG (134 aa)) folds into the JmjC domain.

In terms of assembly, oligomer. Dimer. Interacts with PKM; regulates angiogenesis and metabolism. Post-translationally, N-glycosylated.

Its subcellular location is the endoplasmic reticulum lumen. The protein resides in the cytoplasm. In terms of biological role, functions as a positive regulator of TNF-induced NF-kappa-B signaling. Regulates angiogenesis and cellular metabolism through interaction with PKM. This chain is JmjC domain-containing protein 8, found in Homo sapiens (Human).